Here is a 409-residue protein sequence, read N- to C-terminus: LL-diaminopimelate aminotransferase (409 aa).

Residues tyrosine 15 and glycine 42 each coordinate substrate. Residues tyrosine 72, 108–109 (SK), tyrosine 132, asparagine 187, tyrosine 218, and 246–248 (SFS) each bind pyridoxal 5'-phosphate. Substrate contacts are provided by lysine 109, tyrosine 132, and asparagine 187. The residue at position 249 (lysine 249) is an N6-(pyridoxal phosphate)lysine. Pyridoxal 5'-phosphate-binding residues include arginine 257 and asparagine 292. Residues asparagine 292 and arginine 388 each coordinate substrate.

The protein belongs to the class-I pyridoxal-phosphate-dependent aminotransferase family. LL-diaminopimelate aminotransferase subfamily. In terms of assembly, homodimer. The cofactor is pyridoxal 5'-phosphate.

The catalysed reaction is (2S,6S)-2,6-diaminopimelate + 2-oxoglutarate = (S)-2,3,4,5-tetrahydrodipicolinate + L-glutamate + H2O + H(+). The protein operates within amino-acid biosynthesis; L-lysine biosynthesis via DAP pathway; LL-2,6-diaminopimelate from (S)-tetrahydrodipicolinate (aminotransferase route): step 1/1. In terms of biological role, involved in the synthesis of meso-diaminopimelate (m-DAP or DL-DAP), required for both lysine and peptidoglycan biosynthesis. Catalyzes the direct conversion of tetrahydrodipicolinate to LL-diaminopimelate. The polypeptide is LL-diaminopimelate aminotransferase (Acaryochloris marina (strain MBIC 11017)).